Consider the following 298-residue polypeptide: Cyclin-C (298 aa).

One can recognise a Cyclin N-terminal domain in the interval 46-162 (NFITAVATEC…ILDCCLVVHH (117 aa)). The disordered stretch occupies residues 278-298 (KLPKPNTPIPPPQQQQSSYHM).

The protein belongs to the cyclin family. Cyclin C subfamily. As to quaternary structure, component of the Mediator complex.

It is found in the nucleus. Component of the Mediator complex, a coactivator involved in regulated gene transcription of nearly all RNA polymerase II-dependent genes. Mediator functions as a bridge to convey information from gene-specific regulatory proteins to the basal RNA polymerase II transcription machinery. Mediator is recruited to promoters by direct interactions with regulatory proteins and serves as a scaffold for the assembly of a functional preinitiation complex with RNA polymerase II and the general transcription factors. Binds to and activates cyclin-dependent kinase cdk-8 that phosphorylates the CTD (C-terminal domain) of the large subunit of RNA polymerase II (RNAp II), which may inhibit the formation of a transcription initiation complex. This is Cyclin-C (cic-1) from Caenorhabditis briggsae.